The primary structure comprises 432 residues: 3-phosphoshikimate 1-carboxyvinyltransferase (432 aa).

3-phosphoshikimate-binding residues include Lys-23, Ser-24, and Arg-28. Lys-23 is a phosphoenolpyruvate binding site. Phosphoenolpyruvate is bound by residues Gly-95 and Arg-123. Ser-167, Gln-169, Asp-317, and Lys-344 together coordinate 3-phosphoshikimate. Residue Gln-169 participates in phosphoenolpyruvate binding. Asp-317 functions as the Proton acceptor in the catalytic mechanism. 2 residues coordinate phosphoenolpyruvate: Arg-348 and Arg-390.

The protein belongs to the EPSP synthase family. Monomer.

It is found in the cytoplasm. The enzyme catalyses 3-phosphoshikimate + phosphoenolpyruvate = 5-O-(1-carboxyvinyl)-3-phosphoshikimate + phosphate. Its pathway is metabolic intermediate biosynthesis; chorismate biosynthesis; chorismate from D-erythrose 4-phosphate and phosphoenolpyruvate: step 6/7. Functionally, catalyzes the transfer of the enolpyruvyl moiety of phosphoenolpyruvate (PEP) to the 5-hydroxyl of shikimate-3-phosphate (S3P) to produce enolpyruvyl shikimate-3-phosphate and inorganic phosphate. The chain is 3-phosphoshikimate 1-carboxyvinyltransferase from Staphylococcus aureus (strain bovine RF122 / ET3-1).